Here is a 193-residue protein sequence, read N- to C-terminus: Protein GrpE (193 aa).

Residues 1-22 (MDPKEKEKMAEELNVEETKDTA) are compositionally biased toward basic and acidic residues. A disordered region spans residues 1-45 (MDPKEKEKMAEELNVEETKDTAEEQPQDDQAEEAAPLTHEEQLEK). The segment covering 23 to 32 (EEQPQDDQAE) has biased composition (acidic residues).

It belongs to the GrpE family. As to quaternary structure, homodimer.

It localises to the cytoplasm. In terms of biological role, participates actively in the response to hyperosmotic and heat shock by preventing the aggregation of stress-denatured proteins, in association with DnaK and GrpE. It is the nucleotide exchange factor for DnaK and may function as a thermosensor. Unfolded proteins bind initially to DnaJ; upon interaction with the DnaJ-bound protein, DnaK hydrolyzes its bound ATP, resulting in the formation of a stable complex. GrpE releases ADP from DnaK; ATP binding to DnaK triggers the release of the substrate protein, thus completing the reaction cycle. Several rounds of ATP-dependent interactions between DnaJ, DnaK and GrpE are required for fully efficient folding. In Bacteroides thetaiotaomicron (strain ATCC 29148 / DSM 2079 / JCM 5827 / CCUG 10774 / NCTC 10582 / VPI-5482 / E50), this protein is Protein GrpE.